Consider the following 322-residue polypeptide: GTP 3',8-cyclase (322 aa).

A Radical SAM core domain is found at 5-233; the sequence is KYGRVVDYLR…NAPASIYRLD (229 aa). R14 is a binding site for GTP. [4Fe-4S] cluster contacts are provided by C21 and C25. Y27 is a binding site for S-adenosyl-L-methionine. [4Fe-4S] cluster is bound at residue C28. Position 64 (R64) interacts with GTP. Residue G68 coordinates S-adenosyl-L-methionine. A GTP-binding site is contributed by T95. S119 provides a ligand contact to S-adenosyl-L-methionine. Residue K155 participates in GTP binding. M189 lines the S-adenosyl-L-methionine pocket. Residues C249 and C252 each coordinate [4Fe-4S] cluster. 254–256 serves as a coordination point for GTP; sequence RIR. Residue C266 coordinates [4Fe-4S] cluster.

Belongs to the radical SAM superfamily. MoaA family. Monomer and homodimer. The cofactor is [4Fe-4S] cluster.

It carries out the reaction GTP + AH2 + S-adenosyl-L-methionine = (8S)-3',8-cyclo-7,8-dihydroguanosine 5'-triphosphate + 5'-deoxyadenosine + L-methionine + A + H(+). The protein operates within cofactor biosynthesis; molybdopterin biosynthesis. Its function is as follows. Catalyzes the cyclization of GTP to (8S)-3',8-cyclo-7,8-dihydroguanosine 5'-triphosphate. In Campylobacter curvus (strain 525.92), this protein is GTP 3',8-cyclase.